The primary structure comprises 371 residues: Cytochrome b (371 aa).

4 consecutive transmembrane segments (helical) span residues 25–45, 69–90, 105–125, and 170–190; these read FGSM…FLAV, WMMQ…YIHI, WMSG…GYVL, and FFAL…LHII. Heme b contacts are provided by H75 and H89. Heme b is bound by residues H174 and H188. H193 is an a ubiquinone binding site. 4 helical membrane-spanning segments follow: residues 218–238, 280–300, 312–332, and 339–358; these read YKDL…VSFF, LGGA…PFTH, LSQL…WAAT, and YIII…ISMP.

It belongs to the cytochrome b family. In terms of assembly, the cytochrome bc1 complex contains 3 respiratory subunits (MT-CYB, CYC1 and UQCRFS1), 2 core proteins (UQCRC1 and UQCRC2) and probably 6 low-molecular weight proteins. Requires heme b as cofactor.

Its subcellular location is the mitochondrion inner membrane. Functionally, component of the ubiquinol-cytochrome c reductase complex (complex III or cytochrome b-c1 complex) that is part of the mitochondrial respiratory chain. The b-c1 complex mediates electron transfer from ubiquinol to cytochrome c. Contributes to the generation of a proton gradient across the mitochondrial membrane that is then used for ATP synthesis. The sequence is that of Cytochrome b (MT-CYB) from Python molurus (Indian python).